A 238-amino-acid polypeptide reads, in one-letter code: Probable transcriptional regulatory protein VV2_1184 (238 aa).

It belongs to the TACO1 family.

Its subcellular location is the cytoplasm. The protein is Probable transcriptional regulatory protein VV2_1184 of Vibrio vulnificus (strain CMCP6).